The primary structure comprises 319 residues: ATP-dependent 6-phosphofructokinase 1 (319 aa).

Gly-11 is an ATP binding site. An ADP-binding site is contributed by 21-25; the sequence is RAVTR. ATP contacts are provided by residues 72 to 73 and 102 to 105; these read RC and GDGS. Asp-103 lines the Mg(2+) pocket. 125–127 contacts substrate; it reads TID. Asp-127 serves as the catalytic Proton acceptor. Arg-154 contacts ADP. Residues Arg-162 and 169–171 each bind substrate; that span reads MGR. ADP contacts are provided by residues 185 to 187 and 213 to 215; these read GAE and KTH. Substrate is bound by residues Glu-222, Arg-243, and 249-252; that span reads HIQR.

It belongs to the phosphofructokinase type A (PFKA) family. ATP-dependent PFK group I subfamily. Prokaryotic clade 'B1' sub-subfamily. Homotetramer. The cofactor is Mg(2+).

The protein localises to the cytoplasm. It catalyses the reaction beta-D-fructose 6-phosphate + ATP = beta-D-fructose 1,6-bisphosphate + ADP + H(+). It participates in carbohydrate degradation; glycolysis; D-glyceraldehyde 3-phosphate and glycerone phosphate from D-glucose: step 3/4. With respect to regulation, allosterically activated by ADP and other diphosphonucleosides, and allosterically inhibited by phosphoenolpyruvate. Catalyzes the phosphorylation of D-fructose 6-phosphate to fructose 1,6-bisphosphate by ATP, the first committing step of glycolysis. The polypeptide is ATP-dependent 6-phosphofructokinase 1 (Clostridium perfringens (strain 13 / Type A)).